The chain runs to 261 residues: tRNA 5-carboxymethoxyuridine methyltransferase (261 aa).

S-adenosyl-L-methionine contacts are provided by residues arginine 26, 52–53, aspartate 73, 102–103, and histidine 119; these read GG and AQ.

This sequence belongs to the class I-like SAM-binding methyltransferase superfamily. CmoM family.

The catalysed reaction is 5-carboxymethoxyuridine(34) in tRNA + S-adenosyl-L-methionine = 5-methoxycarbonylmethoxyuridine(34) in tRNA + S-adenosyl-L-homocysteine. Catalyzes the methylation of 5-carboxymethoxyuridine (cmo5U) to form 5-methoxycarbonylmethoxyuridine (mcmo5U) at position 34 in tRNAs. Four tRNAs (tRNA(Ala1), tRNA(Ser1), tRNA(Pro3) and tRNA(Thr4)) are fully modified with mcmo5U in stationary-phase E.coli. Also present at low frequency in tRNA(Leu3) and tRNA(Val1). The sequence is that of tRNA 5-carboxymethoxyuridine methyltransferase from Escherichia coli (strain K12).